A 438-amino-acid polypeptide reads, in one-letter code: Aflatoxin cluster transcriptional coactivator aflS (438 aa).

Residues 65–134 form the HTH iclR-type domain; it reads LALYNQLLAC…PSPGHVAHSV (70 aa). A DNA-binding region (H-T-H motif) is located at residues 95-114; sequence FEDVADIAGVPECRLRRLVR.

As to quaternary structure, interacts with aflR.

The protein localises to the nucleus. It localises to the endosome. In terms of biological role, transcription coactivator involved in regulation of the aflatoxin biosynthesis gene cluster with aflR. The ratio of the expression data between aflS:aflR plays a crucial role in the regulation of aflatoxins production. A high ratio, produced at a range between 17 and 30 degrees Celsius, corresponds with the production profile of aflatoxin G1 biosynthesis. A low ratio, produced over 30 degrees Celsius, is related to aflatoxin B1 biosynthesis. AflJ may act in aflR transport to or from the nucleus, thus controlling the availability of aflR for transcriptional activation of aflatoxin biosynthesis cluster genes. AflJ may also assist in directing endosomes to the cytoplasmic membrane for aflatoxin export. The chain is Aflatoxin cluster transcriptional coactivator aflS from Aspergillus parasiticus (strain ATCC 56775 / NRRL 5862 / SRRC 143 / SU-1).